The sequence spans 428 residues: Dihydroorotase (428 aa).

2 residues coordinate Zn(2+): histidine 59 and histidine 61. Residues 61–63 (HLR) and asparagine 93 contribute to the substrate site. Residues aspartate 151, histidine 178, and histidine 231 each contribute to the Zn(2+) site. Residue asparagine 277 participates in substrate binding. Aspartate 304 is a Zn(2+) binding site. Residue aspartate 304 is part of the active site. Residues histidine 308 and 322–323 (FG) each bind substrate.

It belongs to the metallo-dependent hydrolases superfamily. DHOase family. Class I DHOase subfamily. Requires Zn(2+) as cofactor.

It catalyses the reaction (S)-dihydroorotate + H2O = N-carbamoyl-L-aspartate + H(+). It functions in the pathway pyrimidine metabolism; UMP biosynthesis via de novo pathway; (S)-dihydroorotate from bicarbonate: step 3/3. Catalyzes the reversible cyclization of carbamoyl aspartate to dihydroorotate. This Bacillus cereus (strain G9842) protein is Dihydroorotase.